The chain runs to 628 residues: tRNA uridine 5-carboxymethylaminomethyl modification enzyme MnmG (628 aa).

Position 14–19 (Gly-14–Gly-19) interacts with FAD. Gly-274–Phe-288 is a binding site for NAD(+).

Belongs to the MnmG family. Homodimer. Heterotetramer of two MnmE and two MnmG subunits. It depends on FAD as a cofactor.

Its subcellular location is the cytoplasm. Functionally, NAD-binding protein involved in the addition of a carboxymethylaminomethyl (cmnm) group at the wobble position (U34) of certain tRNAs, forming tRNA-cmnm(5)s(2)U34. The protein is tRNA uridine 5-carboxymethylaminomethyl modification enzyme MnmG of Clostridium kluyveri (strain ATCC 8527 / DSM 555 / NBRC 12016 / NCIMB 10680 / K1).